A 244-amino-acid polypeptide reads, in one-letter code: Ethylene-responsive transcription factor ERF013 (244 aa).

Positions 1 to 33 (MVKQELKIQVTTSSSSLSHSSSSSSSSTSALRH) are disordered. The span at 11 to 29 (TTSSSSLSHSSSSSSSSTS) shows a compositional bias: low complexity. The AP2/ERF DNA-binding region spans 42–99 (KYKGVRMRSWGSWVTEIRAPNQKTRIWLGSYSTAEAAARAYDAALLCLKGPKANLNFP). The disordered stretch occupies residues 123–178 (QKVAAQAANSSSDHFTPPSDENDHDHDDGLDHHPSASSSAASSPPDDDHHNDDDGD). Positions 143–156 (ENDHDHDDGLDHHP) are enriched in basic and acidic residues. A compositionally biased stretch (low complexity) spans 157–166 (SASSSAASSP).

It belongs to the AP2/ERF transcription factor family. ERF subfamily.

It localises to the nucleus. Its function is as follows. Probably acts as a transcriptional activator. Binds to the GCC-box pathogenesis-related promoter element. May be involved in the regulation of gene expression by stress factors and by components of stress signal transduction pathways. In Arabidopsis thaliana (Mouse-ear cress), this protein is Ethylene-responsive transcription factor ERF013 (ERF013).